The chain runs to 521 residues: GMP synthase [glutamine-hydrolyzing] (521 aa).

Residues 10 to 204 (SLLILDFGSQ…ALGICGCEND (195 aa)) form the Glutamine amidotransferase type-1 domain. Cys87 functions as the Nucleophile in the catalytic mechanism. Residues His178 and Glu180 contribute to the active site. Residues 205–396 (WNMHNFAEEQ…LGMPREMLMR (192 aa)) enclose the GMPS ATP-PPase domain. An ATP-binding site is contributed by 232–238 (SGGVDSS).

Homodimer.

It carries out the reaction XMP + L-glutamine + ATP + H2O = GMP + L-glutamate + AMP + diphosphate + 2 H(+). It functions in the pathway purine metabolism; GMP biosynthesis; GMP from XMP (L-Gln route): step 1/1. In terms of biological role, catalyzes the synthesis of GMP from XMP. This chain is GMP synthase [glutamine-hydrolyzing], found in Wolinella succinogenes (strain ATCC 29543 / DSM 1740 / CCUG 13145 / JCM 31913 / LMG 7466 / NCTC 11488 / FDC 602W) (Vibrio succinogenes).